The sequence spans 293 residues: Probable porphobilinogen deaminase (293 aa).

Position 233 is an S-(dipyrrolylmethanemethyl)cysteine (C233).

The protein belongs to the HMBS family. Dipyrromethane serves as cofactor.

It carries out the reaction 4 porphobilinogen + H2O = hydroxymethylbilane + 4 NH4(+). The protein operates within porphyrin-containing compound metabolism; protoporphyrin-IX biosynthesis; coproporphyrinogen-III from 5-aminolevulinate: step 2/4. Its function is as follows. Tetrapolymerization of the monopyrrole PBG into the hydroxymethylbilane pre-uroporphyrinogen in several discrete steps. The protein is Probable porphobilinogen deaminase of Saccharolobus islandicus (strain L.S.2.15 / Lassen #1) (Sulfolobus islandicus).